A 962-amino-acid polypeptide reads, in one-letter code: Nonsense-mediated mRNA decay factor SMG8 (962 aa).

Positions 634 to 661 (RSPEISSQIASSGLSSRSNSTSSGTSSA) are disordered. Residues 639–661 (SSQIASSGLSSRSNSTSSGTSSA) are compositionally biased toward low complexity.

Belongs to the SMG8 family.

Functionally, involved in nonsense-mediated decay (NMD) of mRNAs containing premature stop codons. Probable component of kinase complex containing nonC and recruited to stalled ribosomes. In Drosophila virilis (Fruit fly), this protein is Nonsense-mediated mRNA decay factor SMG8.